The sequence spans 168 residues: Cytochrome c-type biogenesis protein CcmE (168 aa).

Topologically, residues 1–23 (MTTAPSGLPGTPLPPARRRERPR) are cytoplasmic. The chain crosses the membrane as a helical; Signal-anchor for type II membrane protein span at residues 24-44 (WPLLVAGAAVLGLIGYMVLGN). Over 45-168 (ANSNLVYYVL…KILNDQSTKP (124 aa)) the chain is Extracellular. Residues H137 and Y141 each contribute to the heme site. Positions 145–168 (DSKGEGQYSQDDLKKILNDQSTKP) are disordered.

Belongs to the CcmE/CycJ family.

It localises to the cell membrane. Its function is as follows. Heme chaperone required for the biogenesis of c-type cytochromes. Transiently binds heme delivered by CcmC and transfers the heme to apo-cytochromes in a process facilitated by CcmF and CcmH. The chain is Cytochrome c-type biogenesis protein CcmE from Deinococcus radiodurans (strain ATCC 13939 / DSM 20539 / JCM 16871 / CCUG 27074 / LMG 4051 / NBRC 15346 / NCIMB 9279 / VKM B-1422 / R1).